The following is a 94-amino-acid chain: Putative RNA-binding protein RbpD (94 aa).

The RRM domain occupies 2-79; that stretch reads TIYVGNLSYR…RQLRVNKAKP (78 aa). Residues 73 to 94 are disordered; the sequence is RVNKAKPREDDRRGSWGKKQDY. Positions 78–94 are enriched in basic and acidic residues; it reads KPREDDRRGSWGKKQDY.

The polypeptide is Putative RNA-binding protein RbpD (rbpD) (Nostoc sp. (strain PCC 7120 / SAG 25.82 / UTEX 2576)).